The following is a 363-amino-acid chain: Apelin receptor B (363 aa).

Topologically, residues Met-1–Leu-38 are extracellular. N-linked (GlcNAc...) asparagine glycosylation occurs at Asn-20. 2 disulfide bridges follow: Cys-27–Cys-287 and Cys-109–Cys-186. A helical membrane pass occupies residues Leu-39–Phe-59. Residues Thr-60 to Asn-77 are Cytoplasmic-facing. The chain crosses the membrane as a helical span at residues Leu-78–Leu-98. Residues Gly-99–Leu-111 are Extracellular-facing. A helical membrane pass occupies residues Ser-112 to Phe-132. Over Asp-133–Ser-152 the chain is Cytoplasmic. Residues Ile-153 to Ile-173 form a helical membrane-spanning segment. Topologically, residues Leu-174–Asn-200 are extracellular. The N-linked (GlcNAc...) asparagine glycan is linked to Asn-182. Residues Phe-201–Leu-221 form a helical membrane-spanning segment. Residues Met-222–Arg-249 are Cytoplasmic-facing. Residues Leu-250 to Ile-270 form a helical membrane-spanning segment. Over Leu-271 to His-297 the chain is Extracellular. Residues Pro-298–Phe-318 traverse the membrane as a helical segment. Over Asp-319–Val-363 the chain is Cytoplasmic.

Belongs to the G-protein coupled receptor 1 family. As to expression, expressed in all blood vessels including the posterior cardinal vein, intersomitic veins and the vitelline vein network.

Its subcellular location is the cell membrane. In terms of biological role, g protein-coupled receptor for peptide hormones apelin (apln) and apelin receptor early endogenous ligand (apela), that plays a role in the regulation of normal cardiovascular function and fluid homeostasis. When acting as apelin receptor, activates both G(i) protein pathway that inhibits adenylate cyclase activity, and the beta-arrestin pathway that promotes internalization of the receptor. Also functions as mechanoreceptor that is activated by pathological stimuli in a G-protein-independent fashion to induce beta-arrestin signaling, hence eliciting cardiac hypertrophy. However, the presence of apelin ligand blunts cardiac hypertrophic induction from APLNR/APJ on response to pathological stimuli. Plays a key role in early development such as gastrulation, blood vessels formation and heart morphogenesis by acting as a receptor for apela hormone, promoting endoderm and mesendoderm cell migration and regulating the migration of cells fated to become myocardial progenitors, respectively. Promotes angioblast migration toward the embryonic midline, i.e. the position of the future vessel formation, during vasculogenesis. May promote sinus venosus (SV)-derived endothelial cells migration into the developing heart to promote coronary blood vessel development. Required for cardiovascular development, particularly for intersomitic vein angiogenesis by acting as a receptor for apln hormone. Also plays a role in various processes in adults such as regulation of blood vessel formation, blood pressure, heart contractility, and heart failure. Acts upstream of the i/o type of G-alpha proteins in the differentiation of endothelium, erythroid cells, myeloid cells and cardiomyocytes. In Xenopus laevis (African clawed frog), this protein is Apelin receptor B (aplnr-b).